A 196-amino-acid chain; its full sequence is Rac-like GTP-binding protein ARAC5 (196 aa).

Residue 16–21 (AVGKTC) participates in GTP binding. Residues 35–43 (YVPTVFDNF) carry the Effector region motif. Residues 119 to 121 (KLD) and 159 to 161 (SSK) contribute to the GTP site. Cysteine methyl ester is present on C193. A lipid anchor (S-geranylgeranyl cysteine) is attached at C193. A propeptide spans 194-196 (VFL) (removed in mature form).

Belongs to the small GTPase superfamily. Rho family. In terms of assembly, interacts with GDI1 and ROPGEF8 homodimer. Binds to SPK1. As to expression, ubiquitous. Preferentially expressed at the tip of root hairs.

Its subcellular location is the cytoplasm. The protein localises to the membrane. It localises to the cell membrane. Its function is as follows. Involved in cell polarity control during the actin-dependent tip growth of root hairs, thus regulating root hair length and root hair initiation. Inactive GDP-bound Rho GTPases reside in the cytosol, are found in a complex with Rho GDP-dissociation inhibitors (Rho GDIs), and are released from the GDI protein in order to translocate to membranes upon activation. This chain is Rac-like GTP-binding protein ARAC5, found in Arabidopsis thaliana (Mouse-ear cress).